Reading from the N-terminus, the 356-residue chain is Cyclin-D4-1 (356 aa).

It belongs to the cyclin family. Cyclin D subfamily.

The chain is Cyclin-D4-1 (CYCD4-1) from Oryza sativa subsp. japonica (Rice).